Here is a 632-residue protein sequence, read N- to C-terminus: 1-deoxy-D-xylulose-5-phosphate synthase (632 aa).

Residues H77 and 118 to 120 (GHA) each bind thiamine diphosphate. Residue D149 coordinates Mg(2+). Thiamine diphosphate is bound by residues 150 to 151 (GS), N178, F287, and E372. N178 provides a ligand contact to Mg(2+).

It belongs to the transketolase family. DXPS subfamily. As to quaternary structure, homodimer. The cofactor is Mg(2+). Thiamine diphosphate is required as a cofactor.

The catalysed reaction is D-glyceraldehyde 3-phosphate + pyruvate + H(+) = 1-deoxy-D-xylulose 5-phosphate + CO2. It functions in the pathway metabolic intermediate biosynthesis; 1-deoxy-D-xylulose 5-phosphate biosynthesis; 1-deoxy-D-xylulose 5-phosphate from D-glyceraldehyde 3-phosphate and pyruvate: step 1/1. Catalyzes the acyloin condensation reaction between C atoms 2 and 3 of pyruvate and glyceraldehyde 3-phosphate to yield 1-deoxy-D-xylulose-5-phosphate (DXP). The protein is 1-deoxy-D-xylulose-5-phosphate synthase of Chlorobium luteolum (strain DSM 273 / BCRC 81028 / 2530) (Pelodictyon luteolum).